The sequence spans 245 residues: MALETLNSPTATTTARPLLRYREEMEPENLEQWAKRKRTKRQRFDHGHQNQETNKNLPSEEEYLALCLLMLARGSAVQSPPLPPLPSRASPSDHRDYKCTVCGKSFSSYQALGGHKTSHRKPTNTSITSGNQELSNNSHSNSGSVVINVTVNTGNGVSQSGKIHTCSICFKSFASGQALGGHKRCHYDGGNNGNGNGSSSNSVELVAGSDVSDVDNERWSEESAIGGHRGFDLNLPADQVSVTTS.

Polar residues predominate over residues 1–15 (MALETLNSPTATTTA). Disordered stretches follow at residues 1 to 57 (MALE…NKNL) and 112 to 141 (LGGHKTSHRKPTNTSITSGNQELSNNSHSN). A C2H2-type 1 zinc finger spans residues 97 to 119 (YKCTVCGKSFSSYQALGGHKTSH). Over residues 123–134 (TNTSITSGNQEL) the composition is skewed to polar residues. A C2H2-type 2 zinc finger spans residues 164–186 (HTCSICFKSFASGQALGGHKRCH). Positions 193 to 231 (GNGNGSSSNSVELVAGSDVSDVDNERWSEESAIGGHRGF) are disordered.

Highly expressed in roots and at lower levels in leaves and stems.

Its subcellular location is the nucleus. Its function is as follows. Transcriptional repressor involved in the inhibition of plant growth under abiotic stress conditions. Can repress the expression of various genes, including osmotic stress and abscisic acid-repressive genes and auxin-inducible genes, by binding to their promoter regions in a DNA sequence-specific manner. The chain is Zinc finger protein AZF1 (AZF1) from Arabidopsis thaliana (Mouse-ear cress).